The chain runs to 209 residues: Redox-sensing transcriptional repressor Rex (209 aa).

A DNA-binding region (H-T-H motif) is located at residues 16–55; the sequence is LYYRFIQNLSLSGKQRVSSAELSEAVKVDSATIRRDFSYF. 90–95 is an NAD(+) binding site; that stretch reads GVGNLG.

It belongs to the transcriptional regulatory Rex family. As to quaternary structure, homodimer.

The protein localises to the cytoplasm. Its function is as follows. Modulates transcription in response to changes in cellular NADH/NAD(+) redox state. The protein is Redox-sensing transcriptional repressor Rex of Bacillus anthracis (strain A0248).